The primary structure comprises 234 residues: Phosphoribosylformylglycinamidine synthase subunit PurQ (234 aa).

Positions 3 to 231 (AAVVVFPGSN…ALYLERRKDH (229 aa)) constitute a Glutamine amidotransferase type-1 domain. Cys-87 serves as the catalytic Nucleophile. Catalysis depends on residues His-200 and Glu-202.

As to quaternary structure, part of the FGAM synthase complex composed of 1 PurL, 1 PurQ and 2 PurS subunits.

The protein localises to the cytoplasm. It carries out the reaction N(2)-formyl-N(1)-(5-phospho-beta-D-ribosyl)glycinamide + L-glutamine + ATP + H2O = 2-formamido-N(1)-(5-O-phospho-beta-D-ribosyl)acetamidine + L-glutamate + ADP + phosphate + H(+). It catalyses the reaction L-glutamine + H2O = L-glutamate + NH4(+). It participates in purine metabolism; IMP biosynthesis via de novo pathway; 5-amino-1-(5-phospho-D-ribosyl)imidazole from N(2)-formyl-N(1)-(5-phospho-D-ribosyl)glycinamide: step 1/2. Functionally, part of the phosphoribosylformylglycinamidine synthase complex involved in the purines biosynthetic pathway. Catalyzes the ATP-dependent conversion of formylglycinamide ribonucleotide (FGAR) and glutamine to yield formylglycinamidine ribonucleotide (FGAM) and glutamate. The FGAM synthase complex is composed of three subunits. PurQ produces an ammonia molecule by converting glutamine to glutamate. PurL transfers the ammonia molecule to FGAR to form FGAM in an ATP-dependent manner. PurS interacts with PurQ and PurL and is thought to assist in the transfer of the ammonia molecule from PurQ to PurL. This Pseudothermotoga lettingae (strain ATCC BAA-301 / DSM 14385 / NBRC 107922 / TMO) (Thermotoga lettingae) protein is Phosphoribosylformylglycinamidine synthase subunit PurQ.